Reading from the N-terminus, the 198-residue chain is Large ribosomal subunit protein bL25 (198 aa).

This sequence belongs to the bacterial ribosomal protein bL25 family. CTC subfamily. In terms of assembly, part of the 50S ribosomal subunit; part of the 5S rRNA/L5/L18/L25 subcomplex. Contacts the 5S rRNA. Binds to the 5S rRNA independently of L5 and L18.

This is one of the proteins that binds to the 5S RNA in the ribosome where it forms part of the central protuberance. The protein is Large ribosomal subunit protein bL25 of Nitrosomonas europaea (strain ATCC 19718 / CIP 103999 / KCTC 2705 / NBRC 14298).